The primary structure comprises 170 residues: Photosystem II extrinsic protein V (170 aa).

An N-terminal signal peptide occupies residues 1–34 (MNKILGIDPLKKFIFGISAFVLLFWQLNVGAANA). Heme c is bound by residues Cys70, Cys73, His74, and His125.

It belongs to the cytochrome c family. PsbV subfamily. PSII is composed of 1 copy each of membrane proteins PsbA, PsbB, PsbC, PsbD, PsbE, PsbF, PsbH, PsbI, PsbJ, PsbK, PsbL, PsbM, PsbT, PsbX, PsbY, PsbZ, Psb30/Ycf12, peripheral proteins PsbO, CyanoQ (PsbQ), PsbU, PsbV and a large number of cofactors. It forms dimeric complexes. Requires heme c as cofactor.

The protein resides in the cellular thylakoid membrane. One of the extrinsic, lumenal subunits of photosystem II (PSII). PSII is a light-driven water plastoquinone oxidoreductase, using light energy to abstract electrons from H(2)O, generating a proton gradient subsequently used for ATP formation. The extrinsic proteins stabilize the structure of photosystem II oxygen-evolving complex (OEC), the ion environment of oxygen evolution and protect the OEC against heat-induced inactivation. Low-potential cytochrome c that plays a role in the OEC of PSII. The chain is Photosystem II extrinsic protein V from Picosynechococcus sp. (strain ATCC 27264 / PCC 7002 / PR-6) (Agmenellum quadruplicatum).